The sequence spans 473 residues: Photosystem II CP43 reaction center protein (473 aa).

A propeptide spanning residues 1–14 (MKTLYSLRRFYHVE) is cleaved from the precursor. T15 carries the post-translational modification N-acetylthreonine. At T15 the chain carries Phosphothreonine. The next 5 helical transmembrane spans lie at 69 to 93 (LFEV…PHLA), 134 to 155 (LLGP…KDRN), 178 to 200 (KALY…RKIT), 255 to 275 (KPFA…LSYS), and 291 to 312 (WFNN…ASQA). E367 lines the [CaMn4O5] cluster pocket. The helical transmembrane segment at 447 to 471 (RARAAAAGFEKGIDRDFEPVLFMTP) threads the bilayer.

It belongs to the PsbB/PsbC family. PsbC subfamily. PSII is composed of 1 copy each of membrane proteins PsbA, PsbB, PsbC, PsbD, PsbE, PsbF, PsbH, PsbI, PsbJ, PsbK, PsbL, PsbM, PsbT, PsbX, PsbY, PsbZ, Psb30/Ycf12, at least 3 peripheral proteins of the oxygen-evolving complex and a large number of cofactors. It forms dimeric complexes. Requires Binds multiple chlorophylls and provides some of the ligands for the Ca-4Mn-5O cluster of the oxygen-evolving complex. It may also provide a ligand for a Cl- that is required for oxygen evolution. PSII binds additional chlorophylls, carotenoids and specific lipids. as cofactor.

Its subcellular location is the plastid. The protein localises to the chloroplast thylakoid membrane. One of the components of the core complex of photosystem II (PSII). It binds chlorophyll and helps catalyze the primary light-induced photochemical processes of PSII. PSII is a light-driven water:plastoquinone oxidoreductase, using light energy to abstract electrons from H(2)O, generating O(2) and a proton gradient subsequently used for ATP formation. The polypeptide is Photosystem II CP43 reaction center protein (Solanum tuberosum (Potato)).